A 579-amino-acid polypeptide reads, in one-letter code: uncharacterized protein (579 aa).

A run of 3 helical transmembrane segments spans residues 173 to 193 (IAMG…GGLA), 196 to 216 (FVAA…MIGA), and 218 to 238 (YLGT…GFGA).

This sequence belongs to the TMCO4 family.

The protein localises to the cytoplasm. The protein resides in the nucleus membrane. This is an uncharacterized protein from Schizosaccharomyces pombe (strain 972 / ATCC 24843) (Fission yeast).